Consider the following 298-residue polypeptide: Large ribosomal subunit protein uL18 (298 aa).

Belongs to the universal ribosomal protein uL18 family. In terms of assembly, component of the large ribosomal subunit. Mature ribosomes consist of a small (40S) and a large (60S) subunit. The 40S subunit contains about 32 different proteins and 1 molecule of RNA (18S). The 60S subunit contains 45 different proteins and 3 molecules of RNA (25S, 5.8S and 5S).

Its subcellular location is the cytoplasm. Its function is as follows. Component of the ribosome, a large ribonucleoprotein complex responsible for the synthesis of proteins in the cell. The small ribosomal subunit (SSU) binds messenger RNAs (mRNAs) and translates the encoded message by selecting cognate aminoacyl-transfer RNA (tRNA) molecules. The large subunit (LSU) contains the ribosomal catalytic site termed the peptidyl transferase center (PTC), which catalyzes the formation of peptide bonds, thereby polymerizing the amino acids delivered by tRNAs into a polypeptide chain. The nascent polypeptides leave the ribosome through a tunnel in the LSU and interact with protein factors that function in enzymatic processing, targeting, and the membrane insertion of nascent chains at the exit of the ribosomal tunnel. The polypeptide is Large ribosomal subunit protein uL18 (Candida albicans (strain SC5314 / ATCC MYA-2876) (Yeast)).